The sequence spans 750 residues: Photosystem I P700 chlorophyll a apoprotein A1 (750 aa).

Helical transmembrane passes span Val70 to Ala93, Leu156 to His179, Leu195 to Leu219, Ile291 to Tyr309, Trp346 to Tyr369, Leu385 to Val411, Ala433 to His455, and Phe531 to Leu549. 2 residues coordinate [4Fe-4S] cluster: Cys573 and Cys582. The next 2 helical transmembrane spans lie at His589–Trp610 and Leu664–Phe686. Chlorophyll a' is bound at residue His675. Residues Met683 and Tyr691 each coordinate chlorophyll a. Trp692 is a binding site for phylloquinone. Residues Ala724–Ala744 traverse the membrane as a helical segment.

This sequence belongs to the PsaA/PsaB family. The PsaA/B heterodimer binds the P700 chlorophyll special pair and subsequent electron acceptors. PSI consists of a core antenna complex that captures photons, and an electron transfer chain that converts photonic excitation into a charge separation. The eukaryotic PSI reaction center is composed of at least 11 subunits. P700 is a chlorophyll a/chlorophyll a' dimer, A0 is one or more chlorophyll a, A1 is one or both phylloquinones and FX is a shared 4Fe-4S iron-sulfur center. serves as cofactor.

The protein localises to the plastid. Its subcellular location is the chloroplast thylakoid membrane. It carries out the reaction reduced [plastocyanin] + hnu + oxidized [2Fe-2S]-[ferredoxin] = oxidized [plastocyanin] + reduced [2Fe-2S]-[ferredoxin]. Its function is as follows. PsaA and PsaB bind P700, the primary electron donor of photosystem I (PSI), as well as the electron acceptors A0, A1 and FX. PSI is a plastocyanin-ferredoxin oxidoreductase, converting photonic excitation into a charge separation, which transfers an electron from the donor P700 chlorophyll pair to the spectroscopically characterized acceptors A0, A1, FX, FA and FB in turn. Oxidized P700 is reduced on the lumenal side of the thylakoid membrane by plastocyanin. This Phalaenopsis aphrodite subsp. formosana (Moth orchid) protein is Photosystem I P700 chlorophyll a apoprotein A1.